The following is a 261-amino-acid chain: Protein phosphatase inhibitor 2 (261 aa).

The segment covering 1-16 (MNKDEEFLEEHHYKDD) has biased composition (basic and acidic residues). The interval 1 to 150 (MNKDEEFLEE…TPYHYYESEE (150 aa)) is required for binding to pppB. Residues 1-261 (MNKDEEFLEE…LNANLSDDEQ (261 aa)) are disordered. Acidic residues predominate over residues 17–60 (DAIEGEEEQGEEEESDLDDDMYNIDGETNDDDDDDEAEDEESSE). Residues 123 to 134 (LTINDMNKSSTM) show a composition bias toward polar residues. Residues 150 to 242 (EETDESKKYL…KKFDNLRKAH (93 aa)) are a coiled coil. The span at 154–163 (ESKKYLENKF) shows a compositional bias: basic and acidic residues. Residues 195 to 206 (DKKKKKKNLKIH) show a composition bias toward basic residues. Over residues 212–225 (DDNDDNEDEDEDET) the composition is skewed to acidic residues. Residues 226–250 (EEKKENKKKFDNLRKAHYNEFKVVR) are compositionally biased toward basic and acidic residues.

The protein belongs to the protein phosphatase inhibitor 2 family. In terms of assembly, interacts with pppB.

Its function is as follows. Inhibitor of protein-phosphatase 1 (PP1). This chain is Protein phosphatase inhibitor 2 (dpiA), found in Dictyostelium discoideum (Social amoeba).